A 158-amino-acid polypeptide reads, in one-letter code: ATP synthase subunit delta (158 aa).

The protein belongs to the ATPase delta chain family. In terms of assembly, F-type ATPases have 2 components, F(1) - the catalytic core - and F(0) - the membrane proton channel. F(1) has five subunits: alpha(3), beta(3), gamma(1), delta(1), epsilon(1). F(0) has three main subunits: a(1), b(2) and c(10-14). The alpha and beta chains form an alternating ring which encloses part of the gamma chain. F(1) is attached to F(0) by a central stalk formed by the gamma and epsilon chains, while a peripheral stalk is formed by the delta and b chains.

It is found in the cell membrane. F(1)F(0) ATP synthase produces ATP from ADP in the presence of a proton or sodium gradient. F-type ATPases consist of two structural domains, F(1) containing the extramembraneous catalytic core and F(0) containing the membrane proton channel, linked together by a central stalk and a peripheral stalk. During catalysis, ATP synthesis in the catalytic domain of F(1) is coupled via a rotary mechanism of the central stalk subunits to proton translocation. Its function is as follows. This protein is part of the stalk that links CF(0) to CF(1). It either transmits conformational changes from CF(0) to CF(1) or is implicated in proton conduction. The polypeptide is ATP synthase subunit delta (Roseiflexus castenholzii (strain DSM 13941 / HLO8)).